Reading from the N-terminus, the 1104-residue chain is Lon protease homolog, mitochondrial (1104 aa).

A mitochondrion-targeting transit peptide spans 1–58 (MLPLRAFARLAQRPRLSRPTQLARSSLPRPSPSRPAAHYLALAPAPSTRFLHSSPPVL). Disordered regions lie at residues 8-144 (ARLA…KEVA) and 275-295 (EGSQ…SEVP). Residues 22 to 46 (LARSSLPRPSPSRPAAHYLALAPAP) are compositionally biased toward low complexity. The span at 80-103 (KQDDQVEKPLPDAESSKSAEERAK) shows a compositional bias: basic and acidic residues. Residues 104–128 (SQSSKPDIKASSSDSVSSSAPAPGS) are compositionally biased toward low complexity. Positions 129 to 139 (ADGGSPPGAGG) are enriched in gly residues. The Lon N-terminal domain occupies 155–444 (VLAIPITHRP…RALVLLKKEL (290 aa)). The span at 281-291 (AKGEGEVKSFE) shows a compositional bias: basic and acidic residues. Position 597-604 (597-604 (GPPGVGKT)) interacts with ATP. The region spanning 895-1082 (SPPAGVSTGL…RQVLHEAFRG (188 aa)) is the Lon proteolytic domain. Active-site residues include Ser-987 and Lys-1030.

It belongs to the peptidase S16 family. In terms of assembly, homohexamer or homoheptamer. Organized in a ring with a central cavity.

Its subcellular location is the mitochondrion matrix. It catalyses the reaction Hydrolysis of proteins in presence of ATP.. Its function is as follows. ATP-dependent serine protease that mediates the selective degradation of misfolded, unassembled or oxidatively damaged polypeptides as well as certain short-lived regulatory proteins in the mitochondrial matrix. May also have a chaperone function in the assembly of inner membrane protein complexes. Participates in the regulation of mitochondrial gene expression and in the maintenance of the integrity of the mitochondrial genome. Binds to mitochondrial DNA in a site-specific manner. The protein is Lon protease homolog, mitochondrial of Cryptococcus neoformans var. neoformans serotype D (strain JEC21 / ATCC MYA-565) (Filobasidiella neoformans).